The chain runs to 850 residues: RPA-related protein RADX (850 aa).

The interval M1–G31 is disordered. Positions W228–N331 form a DNA-binding region, OB. Disordered stretches follow at residues E575 to Q612 and G632 to R671. The span at G590–P608 shows a compositional bias: basic and acidic residues. Positions P643 to G668 are enriched in polar residues.

It is found in the chromosome. Its function is as follows. Single-stranded DNA-binding protein recruited to replication forks to maintain genome stability. Prevents fork collapse by antagonizing the accumulation of RAD51 at forks to ensure the proper balance of fork remodeling and protection without interfering with the capacity of cells to complete homologous recombination of double-strand breaks. The sequence is that of RPA-related protein RADX from Mus musculus (Mouse).